Consider the following 342-residue polypeptide: Predicted GPI-anchored protein 54 (342 aa).

The signal sequence occupies residues 1-16 (MRANYLLLLAATAVQA). N-linked (GlcNAc...) asparagine glycosylation is found at Asn-25, Asn-105, and Asn-151. A lipid anchor (GPI-anchor amidated glycine) is attached at Gly-314. Positions 315 to 342 (ASQSHPISSYSNYTISDYAPPISSYYSL) are cleaved as a propeptide — removed in mature form. N-linked (GlcNAc...) asparagine glycosylation is present at Asn-326.

It is found in the cell membrane. This chain is Predicted GPI-anchored protein 54 (PGA54), found in Candida albicans (strain SC5314 / ATCC MYA-2876) (Yeast).